Here is a 247-residue protein sequence, read N- to C-terminus: Vacuolar iron transporter 1 (247 aa).

The Cytoplasmic portion of the chain corresponds to 1 to 33 (MVIAGVSPPTPSSENLLQEHEEKHFTATDVVRD). A helical transmembrane segment spans residues 34-54 (VIIGVSDGLTVPFALAAGLSG). Over 55 to 60 (ANVPSS) the chain is Vacuolar. Residues 61–81 (LILTAGIAEVAAGAISMGLGG) form a helical membrane-spanning segment. The Cytoplasmic segment spans residues 82 to 167 (YLAAKSEEDH…PRRALESAMT (86 aa)). Fe cation contacts are provided by Glu-99, Glu-102, Glu-110, Glu-113, Met-146, and Glu-150. The helical transmembrane segment at 168–188 (IALAYVVGGLVPLSPYFFIPF) threads the bilayer. Residues 189 to 191 (AKQ) lie on the Vacuolar side of the membrane. The chain crosses the membrane as a helical span at residues 192–212 (AMITSIAVTLLALVVFGYIKG). The Cytoplasmic segment spans residues 213–219 (RFTGSNP). A helical transmembrane segment spans residues 220-240 (VLSSIQTAIIGALASAAAYAM). Residues 241–247 (AKAVQSV) are Vacuolar-facing.

Belongs to the CCC1 family. In terms of tissue distribution, expressed at high levels in the blue epidermal cells of the inner bottom part of the petal (at protein level). No detectable expression in parenchyma and epidermis of the purple segments of the petal, parenchyma of the blue segments, leaf, stem, bulb and root (at protein level). High levels of mRNA in the blue epidermal cells of the inner bottom part of the petal. Low-levels of mRNA in the purple segments of the petal, stem, leaf, root, bulb and pistil.

It is found in the vacuole membrane. It carries out the reaction Fe(2+)(in) = Fe(2+)(out). Its function is as follows. Vacuolar iron transporter involved in the transfer of iron ions from the cytosol to the vacuole for intracellular iron storage. Plays an essential role in the development of blue coloration in tulip petals most likely due to the accumulation of ferrous ions that can form complexes with anthocyanins. The sequence is that of Vacuolar iron transporter 1 from Tulipa gesneriana (Garden tulip).